A 342-amino-acid polypeptide reads, in one-letter code: Protein RecA (342 aa).

The protein belongs to the RecA family.

Its subcellular location is the cytoplasm. Functionally, can catalyze the hydrolysis of ATP in the presence of single-stranded DNA, the ATP-dependent uptake of single-stranded DNA by duplex DNA, and the ATP-dependent hybridization of homologous single-stranded DNAs. It interacts with LexA causing its activation and leading to its autocatalytic cleavage. This is Protein RecA from Pectobacterium carotovorum (Erwinia carotovora).